A 356-amino-acid polypeptide reads, in one-letter code: Histidinol-phosphate aminotransferase (356 aa).

Lys214 is subject to N6-(pyridoxal phosphate)lysine.

Belongs to the class-II pyridoxal-phosphate-dependent aminotransferase family. Histidinol-phosphate aminotransferase subfamily. In terms of assembly, homodimer. Pyridoxal 5'-phosphate is required as a cofactor.

It catalyses the reaction L-histidinol phosphate + 2-oxoglutarate = 3-(imidazol-4-yl)-2-oxopropyl phosphate + L-glutamate. Its pathway is amino-acid biosynthesis; L-histidine biosynthesis; L-histidine from 5-phospho-alpha-D-ribose 1-diphosphate: step 7/9. This Escherichia coli O45:K1 (strain S88 / ExPEC) protein is Histidinol-phosphate aminotransferase.